The chain runs to 102 residues: NADH-quinone oxidoreductase subunit K (102 aa).

3 helical membrane-spanning segments follow: residues 5–25 (LSHYLTVSAILFTLGVFGIFL), 31–51 (IVILMSIELILLAVNINMVAF), and 65–85 (LFILTVAAAEAAIGLAILVVF).

Belongs to the complex I subunit 4L family. In terms of assembly, NDH-1 is composed of 14 different subunits. Subunits NuoA, H, J, K, L, M, N constitute the membrane sector of the complex.

It localises to the cell inner membrane. It catalyses the reaction a quinone + NADH + 5 H(+)(in) = a quinol + NAD(+) + 4 H(+)(out). Its function is as follows. NDH-1 shuttles electrons from NADH, via FMN and iron-sulfur (Fe-S) centers, to quinones in the respiratory chain. The immediate electron acceptor for the enzyme in this species is believed to be ubiquinone. Couples the redox reaction to proton translocation (for every two electrons transferred, four hydrogen ions are translocated across the cytoplasmic membrane), and thus conserves the redox energy in a proton gradient. The polypeptide is NADH-quinone oxidoreductase subunit K (Rhizobium johnstonii (strain DSM 114642 / LMG 32736 / 3841) (Rhizobium leguminosarum bv. viciae)).